We begin with the raw amino-acid sequence, 82 residues long: M-zodatoxin-Lt3b (82 aa).

The N-terminal stretch at 1-22 (MKTYAVLLALVVAFVCIAESTG) is a signal peptide. Positions 23-61 (YPVEDLEDDELTELEAEALLEDLLEDLELEDLDYNEEAR) are excised as a propeptide. The Processing quadruplet motif motif lies at 58 to 61 (EEAR). Ala-81 carries the post-translational modification Alanine amide.

Post-translationally, cleavage of the propeptide depends on the processing quadruplet motif (XXXR, with at least one of X being E). In terms of tissue distribution, expressed by the venom gland.

It localises to the secreted. It has antimicrobial activity against Gram-positive bacteria (A.globiformis VKM Ac-1112 (MIC=0.7 uM), and B.subtilis VKM B-501 (MIC=2.9 uM)), Gram-negative bacteria (E.coli DH5-alpha (MIC=23 uM), E.coli MH1 (MIC=28 uM), and P.aeruginosa PAO1 (MIC&gt;45 uM)), and yeasts (P.pastoris GS115 (MIC=23 uM), and S.cerevisiae Y190 (MIC=23 uM)). Does not have hemolytic against rabbit erythrocytes. Causes paralysis, but is not lethal when injected into insect (M.domestica) larvae. The protein is M-zodatoxin-Lt3b of Lachesana tarabaevi (Spider).